Reading from the N-terminus, the 574-residue chain is Arginine--tRNA ligase (574 aa).

Residues 121–131 (PNIAKEMHIGH) carry the 'HIGH' region motif.

The protein belongs to the class-I aminoacyl-tRNA synthetase family. As to quaternary structure, monomer.

The protein resides in the cytoplasm. The catalysed reaction is tRNA(Arg) + L-arginine + ATP = L-arginyl-tRNA(Arg) + AMP + diphosphate. This is Arginine--tRNA ligase from Buchnera aphidicola subsp. Acyrthosiphon pisum (strain 5A).